The following is a 616-amino-acid chain: Chaperone protein HscA (616 aa).

It belongs to the heat shock protein 70 family.

Its function is as follows. Chaperone involved in the maturation of iron-sulfur cluster-containing proteins. Has a low intrinsic ATPase activity which is markedly stimulated by HscB. Involved in the maturation of IscU. This Escherichia fergusonii (strain ATCC 35469 / DSM 13698 / CCUG 18766 / IAM 14443 / JCM 21226 / LMG 7866 / NBRC 102419 / NCTC 12128 / CDC 0568-73) protein is Chaperone protein HscA.